The chain runs to 583 residues: DNA ligase (583 aa).

Glutamate 249 serves as a coordination point for ATP. Lysine 251 functions as the N6-AMP-lysine intermediate in the catalytic mechanism. Arginine 256, arginine 271, glutamate 301, phenylalanine 341, arginine 416, and lysine 422 together coordinate ATP.

The protein belongs to the ATP-dependent DNA ligase family. Mg(2+) is required as a cofactor.

It catalyses the reaction ATP + (deoxyribonucleotide)n-3'-hydroxyl + 5'-phospho-(deoxyribonucleotide)m = (deoxyribonucleotide)n+m + AMP + diphosphate.. DNA ligase that seals nicks in double-stranded DNA during DNA replication, DNA recombination and DNA repair. The sequence is that of DNA ligase from Pyrobaculum calidifontis (strain DSM 21063 / JCM 11548 / VA1).